Reading from the N-terminus, the 492-residue chain is Cytochrome P450 monooxygenase rdc4 (492 aa).

Residue Cys-435 participates in heme binding.

The protein belongs to the cytochrome P450 family. It depends on heme as a cofactor.

It functions in the pathway secondary metabolite biosynthesis. Functionally, cytochrome P450 monooxygenase; part of the gene cluster that mediates the biosynthesis of radicicol, a resorcylic acid lactone (RAL) that irreversibly inhibits the HSP90 molecular chaperone, an important target for cancer chemotherapy. The radicicol cluster encodes only two apparent post-PKS enzymes, a cytochrome P450 monooxygenase (rdc4) and a non-heme halogenase (rdc2) that could introduce the epoxide and the chlorine, respectively. If this cluster includes all the genes required for radicicol biosynthesis, the remaining structural features of radicicol are presumably generated by the PKSs rdc1 and rdc5. The C-2' ketone could arise if the R-PKS rdc5 and NR-PKS rdc1 each carry out four iterations, in contrast to the five iteration-three iteration split for the hypothemycin PKSs. The origin of the cis 5',6' double bond is not known. The radicicol R-PKS rdc5 ER domain may catalyze either double bond isomerization or reduction in the third iteration. The chain is Cytochrome P450 monooxygenase rdc4 from Metacordyceps chlamydosporia (Nematophagous fungus).